The following is a 457-amino-acid chain: Heme sensor protein HssS (457 aa).

Transmembrane regions (helical) follow at residues 9–29 (IAIY…VLTN) and 164–184 (TFLA…VIAS). Positions 186-238 (YSIIRPVKKLKLATERLIDGDFETPIKQTRKDEIGTLQYHFNKMRESLGQVDQ) constitute an HAMP domain. In terms of domain architecture, Histidine kinase spans 246–456 (NVSHEIKTPL…TFTITLPNNS (211 aa)). The residue at position 249 (His249) is a Phosphohistidine; by autocatalysis.

Autophosphorylated.

It localises to the cell membrane. The enzyme catalyses ATP + protein L-histidine = ADP + protein N-phospho-L-histidine.. Member of the two-component regulatory system HssS/HssR involved in intracellular heme homeostasis and tempering of staphylococcal virulence. HssS functions as a heme sensor histidine kinase which is autophosphorylated at a histidine residue and transfers its phosphate group to an aspartate residue of HssR. HssR/HssS activates the expression of hrtAB, an efflux pump, in response to extracellular heme, hemin, hemoglobin or blood. The sequence is that of Heme sensor protein HssS (hssS) from Staphylococcus aureus (strain Mu3 / ATCC 700698).